The primary structure comprises 184 residues: ATP synthase subunit b, chloroplastic (184 aa).

A helical transmembrane segment spans residues 27–49 (LATNLINLSVVLGVLIFFGKGVL).

This sequence belongs to the ATPase B chain family. As to quaternary structure, F-type ATPases have 2 components, F(1) - the catalytic core - and F(0) - the membrane proton channel. F(1) has five subunits: alpha(3), beta(3), gamma(1), delta(1), epsilon(1). F(0) has four main subunits: a(1), b(1), b'(1) and c(10-14). The alpha and beta chains form an alternating ring which encloses part of the gamma chain. F(1) is attached to F(0) by a central stalk formed by the gamma and epsilon chains, while a peripheral stalk is formed by the delta, b and b' chains.

The protein resides in the plastid. It is found in the chloroplast thylakoid membrane. Functionally, f(1)F(0) ATP synthase produces ATP from ADP in the presence of a proton or sodium gradient. F-type ATPases consist of two structural domains, F(1) containing the extramembraneous catalytic core and F(0) containing the membrane proton channel, linked together by a central stalk and a peripheral stalk. During catalysis, ATP synthesis in the catalytic domain of F(1) is coupled via a rotary mechanism of the central stalk subunits to proton translocation. In terms of biological role, component of the F(0) channel, it forms part of the peripheral stalk, linking F(1) to F(0). This chain is ATP synthase subunit b, chloroplastic, found in Guizotia abyssinica (Niger).